A 200-amino-acid polypeptide reads, in one-letter code: MKLKAIMSKCEFIIGATHVKSFPNFSIPEIAIAGRSNVGKSSLINAITNNKKNAKTSSRPGCTKQINFYLINKSFMVLVDLPGYGYSKATRATINNYLFLMEYYLLNSKNLLKVILLIDVKVGFKEIDLDFINWLELNHIYYQLVLTKIDRVSKEILDVNINYIKNLNLGFVIYPVISASSKYKQGIGELIYEIAQCIKK.

One can recognise an EngB-type G domain in the interval 26 to 200 (SIPEIAIAGR…IYEIAQCIKK (175 aa)). Residues 34-41 (GRSNVGKS), 61-65 (GCTKQ), 80-83 (DLPG), 147-150 (TKID), and 176-179 (VISA) contribute to the GTP site. Residues S41 and T63 each contribute to the Mg(2+) site.

The protein belongs to the TRAFAC class TrmE-Era-EngA-EngB-Septin-like GTPase superfamily. EngB GTPase family. It depends on Mg(2+) as a cofactor.

Necessary for normal cell division and for the maintenance of normal septation. The protein is Probable GTP-binding protein EngB of Ehrlichia canis (strain Jake).